A 115-amino-acid chain; its full sequence is Large ribosomal subunit protein bL19 (115 aa).

This sequence belongs to the bacterial ribosomal protein bL19 family. Part of the 50S ribosomal subunit.

In terms of biological role, this protein is located at the 30S-50S ribosomal subunit interface and may play a role in the structure and function of the aminoacyl-tRNA binding site. The sequence is that of Large ribosomal subunit protein bL19 (rplS) from Bacillus subtilis (strain 168).